A 124-amino-acid polypeptide reads, in one-letter code: MPTIQQLVRKGRQDKVSKNKTPALKGSPQRRGVCTRVYTTTPKKPNSALRKVARVRLSSGVEVTAYIPGVGHNLQEHSIVLVRGGRVKDLPGVRYKIIRGTLDTQGVKNRKQARSRYGAKKEKS.

The tract at residues 1 to 32 (MPTIQQLVRKGRQDKVSKNKTPALKGSPQRRG) is disordered. Aspartate 89 is subject to 3-methylthioaspartic acid.

This sequence belongs to the universal ribosomal protein uS12 family. In terms of assembly, part of the 30S ribosomal subunit. Contacts proteins S8 and S17. May interact with IF1 in the 30S initiation complex.

In terms of biological role, with S4 and S5 plays an important role in translational accuracy. Functionally, interacts with and stabilizes bases of the 16S rRNA that are involved in tRNA selection in the A site and with the mRNA backbone. Located at the interface of the 30S and 50S subunits, it traverses the body of the 30S subunit contacting proteins on the other side and probably holding the rRNA structure together. The combined cluster of proteins S8, S12 and S17 appears to hold together the shoulder and platform of the 30S subunit. The polypeptide is Small ribosomal subunit protein uS12 (Nocardioides sp. (strain ATCC BAA-499 / JS614)).